Reading from the N-terminus, the 162-residue chain is MAARRDGWLGPAFGLRLLLATVLQTVSALGAEFSSESCRELGFSSNLLCSSCDLLGQFNLLQLDPDCRGCCQEEAQFETKKLYAGAILEVCGUKLGRFPQVQAFVRSDKPKLFKGLQIKYVRGSDPVLKLLDDSGNIAEELSILKWNTDSVEEFLSEKLERI.

The first 28 residues, 1-28, serve as a signal peptide directing secretion; the sequence is MAARRDGWLGPAFGLRLLLATVLQTVSA. Position 93 (selenocysteine 93) is a non-standard amino acid, selenocysteine.

This sequence belongs to the selenoprotein M/F family. Forms a tight complex with UGGT1/UGCGL1. Interacts with UGGT2/UGCGL2. Interacts with RDH11.

The protein resides in the endoplasmic reticulum lumen. Functionally, may be involved in redox reactions associated with the formation of disulfide bonds. May contribute to the quality control of protein folding in the endoplasmic reticulum. May regulate protein folding by enhancing the catalytic activity of UGGT1/UGCGL1 and UGGT2/UGCGL2. In Bos taurus (Bovine), this protein is Selenoprotein F.